The chain runs to 278 residues: MTRIESTFEILKAQNKKALIPYVMAGDPNPSNFVGLLHDLVKHGADMIEVGLPFSDPMADGPTVALAGERALAAGTSTRDALKMVAEFRQQDTQTPIILMGYLNPVEIIGYDNFVALCEQSGVDGILMVDLPPAEAGSFTQHLTEHSMNEIFLLSPTTLPERREQVLTHCGGYIYYVSLKGVTGSATLDTDDVATQVQAIKAETDLPVCVGFGIRDAASAKAIGAHADGIIVGSALVQNFADIDGNDATAVAHAQQKIMAKMTELREALDSLSVSSNG.

Active-site proton acceptor residues include Glu-49 and Asp-60.

This sequence belongs to the TrpA family. In terms of assembly, tetramer of two alpha and two beta chains.

The enzyme catalyses (1S,2R)-1-C-(indol-3-yl)glycerol 3-phosphate + L-serine = D-glyceraldehyde 3-phosphate + L-tryptophan + H2O. It functions in the pathway amino-acid biosynthesis; L-tryptophan biosynthesis; L-tryptophan from chorismate: step 5/5. In terms of biological role, the alpha subunit is responsible for the aldol cleavage of indoleglycerol phosphate to indole and glyceraldehyde 3-phosphate. This is Tryptophan synthase alpha chain from Psychrobacter arcticus (strain DSM 17307 / VKM B-2377 / 273-4).